Consider the following 628-residue polypeptide: Probable potassium transport system protein Kup (628 aa).

Transmembrane regions (helical) follow at residues 20 to 40 (ALLTLGALGVVFGDIGTSPLY), 63 to 83 (IISMVLWTITLIVTVKYVMLV), 110 to 130 (FVAVAGMLGAALFYGDVVITP), 151 to 171 (FILPISLAVLIAIFAIQPLGT), 178 to 198 (FGPIMLLWFVTLAGLGIPQII), 212 to 232 (ALGLIVAEPFQAFVLLGAVVL), 256 to 276 (WFCVVMPALILTYLGQGALVI), 296 to 316 (IPLVILATIATVIASQAVISG), 346 to 366 (IYMPLVNGLLFVSVMVVVLVF), 375 to 395 (AYGLAVTGTLVLVSVLYLIYV), 398 to 418 (TWWKTALFIVFIGIPEVLLFA), and 422 to 442 (TKIHDGGWLPLLTAAVLIVVM).

This sequence belongs to the HAK/KUP transporter (TC 2.A.72) family.

The protein localises to the cell membrane. It carries out the reaction K(+)(in) + H(+)(in) = K(+)(out) + H(+)(out). Transport of potassium into the cell. Likely operates as a K(+):H(+) symporter. The chain is Probable potassium transport system protein Kup from Corynebacterium glutamicum (strain R).